The primary structure comprises 295 residues: MSIDINNRLYTALVTPMFEDGSIDWISFEKLLKTQEYYECGVLILGSTGEALSLDFDEQCEVVRFVTNLNLSVPIMVGVGGFQLAKQLQWIEFCQTQRVDCFLVVTPLYTKPGAASQTGWFKAVLDKAERPCMLYNVPSRTGINLAEEVLTSLKKHPNLWALKEASGDIQRCARYHDLAPNLVIYSGEDGLLPELADVGARGLVSVISNVWPEQTKKYVRQSLAHEITVEDKAVWEAATRSCFSVANPIPVKVWLAHNSLITTNTLRAPLLADELQDLSLLISADSLVKDWFSHI.

Thr-48 lines the pyruvate pocket. The Proton donor/acceptor role is filled by Tyr-135. The Schiff-base intermediate with substrate role is filled by Lys-163. Val-204 contacts pyruvate.

The protein belongs to the DapA family. As to quaternary structure, homotetramer; dimer of dimers.

Its subcellular location is the cytoplasm. The catalysed reaction is L-aspartate 4-semialdehyde + pyruvate = (2S,4S)-4-hydroxy-2,3,4,5-tetrahydrodipicolinate + H2O + H(+). The protein operates within amino-acid biosynthesis; L-lysine biosynthesis via DAP pathway; (S)-tetrahydrodipicolinate from L-aspartate: step 3/4. Catalyzes the condensation of (S)-aspartate-beta-semialdehyde [(S)-ASA] and pyruvate to 4-hydroxy-tetrahydrodipicolinate (HTPA). In Francisella tularensis subsp. novicida (strain U112), this protein is 4-hydroxy-tetrahydrodipicolinate synthase.